The chain runs to 438 residues: UDP-N-acetylmuramoylalanine--D-glutamate ligase (438 aa).

Residue 112-118 (GSNGKST) coordinates ATP.

It belongs to the MurCDEF family.

It localises to the cytoplasm. It catalyses the reaction UDP-N-acetyl-alpha-D-muramoyl-L-alanine + D-glutamate + ATP = UDP-N-acetyl-alpha-D-muramoyl-L-alanyl-D-glutamate + ADP + phosphate + H(+). It participates in cell wall biogenesis; peptidoglycan biosynthesis. In terms of biological role, cell wall formation. Catalyzes the addition of glutamate to the nucleotide precursor UDP-N-acetylmuramoyl-L-alanine (UMA). This is UDP-N-acetylmuramoylalanine--D-glutamate ligase from Shigella boydii serotype 4 (strain Sb227).